A 174-amino-acid chain; its full sequence is MTRILGIDPGSQRTGIGIIDVDESGRSRHVFHAPLVLLGEGDFAQRLKRLLHGLGELIETYQPQEVAIEKVFMGKSADSALKLGHARGAAICAVVLRDLPVHEYAATEIKLALVGKGGADKVQVQHMVGIMLNLKGKLQADAADALAVAITHAHVRATAQRLGVNTQQAWSRKR.

Active-site residues include D8, E69, and D141. Positions 8, 69, and 141 each coordinate Mg(2+).

Belongs to the RuvC family. Homodimer which binds Holliday junction (HJ) DNA. The HJ becomes 2-fold symmetrical on binding to RuvC with unstacked arms; it has a different conformation from HJ DNA in complex with RuvA. In the full resolvosome a probable DNA-RuvA(4)-RuvB(12)-RuvC(2) complex forms which resolves the HJ. Requires Mg(2+) as cofactor.

Its subcellular location is the cytoplasm. The catalysed reaction is Endonucleolytic cleavage at a junction such as a reciprocal single-stranded crossover between two homologous DNA duplexes (Holliday junction).. Functionally, the RuvA-RuvB-RuvC complex processes Holliday junction (HJ) DNA during genetic recombination and DNA repair. Endonuclease that resolves HJ intermediates. Cleaves cruciform DNA by making single-stranded nicks across the HJ at symmetrical positions within the homologous arms, yielding a 5'-phosphate and a 3'-hydroxyl group; requires a central core of homology in the junction. The consensus cleavage sequence is 5'-(A/T)TT(C/G)-3'. Cleavage occurs on the 3'-side of the TT dinucleotide at the point of strand exchange. HJ branch migration catalyzed by RuvA-RuvB allows RuvC to scan DNA until it finds its consensus sequence, where it cleaves and resolves the cruciform DNA. The sequence is that of Crossover junction endodeoxyribonuclease RuvC from Xanthomonas campestris pv. campestris (strain 8004).